Consider the following 148-residue polypeptide: Large ribosomal subunit protein bL9 (148 aa).

Belongs to the bacterial ribosomal protein bL9 family.

Binds to the 23S rRNA. This chain is Large ribosomal subunit protein bL9, found in Clostridium beijerinckii (strain ATCC 51743 / NCIMB 8052) (Clostridium acetobutylicum).